Reading from the N-terminus, the 271-residue chain is Co-chaperone protein DjlA (271 aa).

The Periplasmic portion of the chain corresponds to 1-6 (MQYWGK). The helical transmembrane segment at 7–31 (IIGVAVALLMGGGFWGVVLGLLIGH) threads the bilayer. The Cytoplasmic segment spans residues 32 to 271 (MFDKARSRKM…ELIKQQKGFK (240 aa)). The 67-residue stretch at 205-271 (DACNVLGVKP…ELIKQQKGFK (67 aa)) folds into the J domain.

As to quaternary structure, homodimer.

It is found in the cell inner membrane. Its function is as follows. Regulatory DnaK co-chaperone. Direct interaction between DnaK and DjlA is needed for the induction of the wcaABCDE operon, involved in the synthesis of a colanic acid polysaccharide capsule, possibly through activation of the RcsB/RcsC phosphotransfer signaling pathway. The colanic acid capsule may help the bacterium survive conditions outside the host. This Escherichia coli O157:H7 protein is Co-chaperone protein DjlA.